The sequence spans 200 residues: Recombination protein RecR (200 aa).

The segment at 59-74 (CEVCGNVCESSPCTIC) adopts a C4-type zinc-finger fold. The Toprim domain occupies 82–177 (GTICVVEEPK…KVTRLASGLP (96 aa)).

Belongs to the RecR family.

In terms of biological role, may play a role in DNA repair. It seems to be involved in an RecBC-independent recombinational process of DNA repair. It may act with RecF and RecO. The protein is Recombination protein RecR of Bifidobacterium animalis subsp. lactis (strain AD011).